The following is a 258-amino-acid chain: tRNA pseudouridine synthase A (258 aa).

Catalysis depends on Asp61, which acts as the Nucleophile. Tyr119 contacts substrate.

The protein belongs to the tRNA pseudouridine synthase TruA family. As to quaternary structure, homodimer.

The enzyme catalyses uridine(38/39/40) in tRNA = pseudouridine(38/39/40) in tRNA. Its function is as follows. Formation of pseudouridine at positions 38, 39 and 40 in the anticodon stem and loop of transfer RNAs. This is tRNA pseudouridine synthase A from Chlorobium phaeobacteroides (strain DSM 266 / SMG 266 / 2430).